A 518-amino-acid chain; its full sequence is Protein CYCLOPS (518 aa).

Residues 401-451 (DKKRKSLERYGSITSAVSDDKGDTTKKRRVERSRKMAEAKERNSTPSVPSD) are disordered. Short sequence motifs (nuclear localization signal) lie at residues 402–405 (KKRK) and 426–429 (KKRR). Residues 433–443 (SRKMAEAKERN) show a composition bias toward basic and acidic residues. The stretch at 452–518 (MQAVLKRCEN…ERILSETEKM (67 aa)) forms a coiled coil.

It belongs to the CYCLOPS family. As to quaternary structure, forms homodimers. Interacts with CCAMK. Phosphorylated at the N-terminus by CCAMK. In terms of tissue distribution, expressed in roots.

It is found in the nucleus. In terms of biological role, involved in symbiotic signaling. Required for root infection by symbiotic rhizobia, infection thread (IT) formation, and nodule development. Probably not involved in nodule organogenesis. Involved in arbuscular mycorrhizal (AM) symbiosis. Required for fungal infection of the outer cortical cell layers, and for arbuscule development during the AM symbiosis, by binding, as a complex comprising CCaMK, CYCLOPS, and DELLA, to RAM1 promoter cis element thus promoting its expression. Acts downstream of CCAMK. Binds to the promoter of ERN1 and strongly transactivates ERN1, a transcriptional regulator required for nodulation. The sequence is that of Protein CYCLOPS from Lotus japonicus (Lotus corniculatus var. japonicus).